The chain runs to 190 residues: Glutathione peroxidase 2 (190 aa).

Residue U40 is part of the active site. A non-standard amino acid (selenocysteine) is located at residue U40.

This sequence belongs to the glutathione peroxidase family. In terms of assembly, homotetramer. In terms of tissue distribution, exclusively expressed in the stomach and small intestine.

Its subcellular location is the cytoplasm. It localises to the cytosol. The catalysed reaction is 2 glutathione + H2O2 = glutathione disulfide + 2 H2O. It catalyses the reaction a hydroperoxy polyunsaturated fatty acid + 2 glutathione = a hydroxy polyunsaturated fatty acid + glutathione disulfide + H2O. It carries out the reaction tert-butyl hydroperoxide + 2 glutathione = tert-butanol + glutathione disulfide + H2O. The enzyme catalyses cumene hydroperoxide + 2 glutathione = 2-phenylpropan-2-ol + glutathione disulfide + H2O. The catalysed reaction is (13S)-hydroperoxy-(9Z,11E)-octadecadienoate + 2 glutathione = (13S)-hydroxy-(9Z,11E)-octadecadienoate + glutathione disulfide + H2O. It catalyses the reaction (5S)-hydroperoxy-(6E,8Z,11Z,14Z)-eicosatetraenoate + 2 glutathione = (5S)-hydroxy-(6E,8Z,11Z,14Z)-eicosatetraenoate + glutathione disulfide + H2O. It carries out the reaction (12R)-hydroperoxy-(5Z,8Z,10E,14Z)-eicosatetraenoate + 2 glutathione = (12R)-hydroxy-(5Z,8Z,10E,14Z)-eicosatetraenoate + glutathione disulfide + H2O. The enzyme catalyses (15S)-hydroperoxy-(5Z,8Z,11Z,13E)-eicosatetraenoate + 2 glutathione = (15S)-hydroxy-(5Z,8Z,11Z,13E)-eicosatetraenoate + glutathione disulfide + H2O. Functionally, catalyzes the reduction of hydroperoxides in a glutathione-dependent manner thus regulating cellular redox homeostasis. Can reduce small soluble hydroperoxides such as H2O2, cumene hydroperoxide and tert-butyl hydroperoxide, as well as several fatty acid-derived hydroperoxides. Cannot reduce phosphatidycholine hydroperoxide. This chain is Glutathione peroxidase 2 (GPX2), found in Macaca fuscata fuscata (Japanese macaque).